Here is a 678-residue protein sequence, read N- to C-terminus: Glycine--tRNA ligase beta subunit (678 aa).

Belongs to the class-II aminoacyl-tRNA synthetase family. Tetramer of two alpha and two beta subunits.

Its subcellular location is the cytoplasm. It carries out the reaction tRNA(Gly) + glycine + ATP = glycyl-tRNA(Gly) + AMP + diphosphate. This chain is Glycine--tRNA ligase beta subunit, found in Streptococcus pneumoniae (strain 70585).